Reading from the N-terminus, the 247-residue chain is MFRYEAKVFKELVDSVSKILDEGLFIITGEGLRLRGMDPARVALVDIEIPSSSFFDFYMAGDVERVELGVNMETLKGVVARAKKGDQLEVRVREDKVLFIVESVVLRRYLLPNLEVIVDVPEDISLEFDATATVIADVVKKTLRDVELVGDIVEFDAGEDYLSIRSVGPERRRVETRLTRESPALIDLEVKEPATSRYDVGYLKRMLGVAKIAESIELSFSTDKPLKMVFKSPDGSRVTYLLAPSTG.

It belongs to the PCNA family. In terms of assembly, heterotrimer. The subunits circularize to form a toroid; DNA passes through its center. Replication factor C (RFC) is required to load the toroid on the DNA.

Its function is as follows. Sliding clamp subunit that acts as a moving platform for DNA processing. Responsible for tethering the catalytic subunit of DNA polymerase and other proteins to DNA during high-speed replication. The chain is DNA polymerase sliding clamp 1 from Aeropyrum pernix (strain ATCC 700893 / DSM 11879 / JCM 9820 / NBRC 100138 / K1).